We begin with the raw amino-acid sequence, 152 residues long: Endoribonuclease YbeY (152 aa).

3 residues coordinate Zn(2+): His113, His117, and His123.

Belongs to the endoribonuclease YbeY family. The cofactor is Zn(2+).

It localises to the cytoplasm. Functionally, single strand-specific metallo-endoribonuclease involved in late-stage 70S ribosome quality control and in maturation of the 3' terminus of the 16S rRNA. This chain is Endoribonuclease YbeY, found in Paracidovorax citrulli (strain AAC00-1) (Acidovorax citrulli).